The chain runs to 613 residues: MIPLRSKVTTVGRNAAGARALWRATGTKENEFGKPIVAIVNSYTQFVPGHVHLKNVGDIVADAVRKAGGVPKEFNTIAVDDGIAMGHGGMLYSLPSREIIADSVEYMVNAHTADAMVCISNCDKITPGMLNAAMRLNIPVVFVSGGPMEAGKAVVVDGVAHAPTDLITAISASASDAVDDAGLAAVEASACPTCGSCSGMFTANSMNCLTEALGLSLPGNGSTLATHAARRALFEKAGETVVELCRRYYGEEDESVLPRGIATKKAFENAMALDMAMGGSTNTILHILAAAQEGEVDFDLADIDELSKNVPCLSKVAPNSDYHMEDVHRAGGIPALLGELNRGGLLNKDVHSVHSNDLEGWLDDWDIRSGKTTEVATELFHAAPGGIRTTEAFSTENRWDELDTDAAKGCIRDVEHAYTADGGLVVLRGNISPDGAVIKSAGIEEELWNFTGPARVVESQEEAVSVILTKTIQAGEVLVVRYEGPSGGPGMQEMLHPTAFLKGSGLGKKCALITDGRFSGGSSGLSIGHVSPEAAHGGVIGLIENGDIVSIDVHNRKLEVQVSNEELQRRRDAMNASEKPWQPVNRNRVVTKALRAYAKMATSADKGAVRQVD.

Aspartate 81 provides a ligand contact to Mg(2+). Cysteine 122 is a binding site for [2Fe-2S] cluster. Aspartate 123 and lysine 124 together coordinate Mg(2+). Lysine 124 carries the post-translational modification N6-carboxylysine. Cysteine 197 is a binding site for [2Fe-2S] cluster. Glutamate 493 is a Mg(2+) binding site. Residue serine 519 is the Proton acceptor of the active site.

This sequence belongs to the IlvD/Edd family. Homodimer. Requires [2Fe-2S] cluster as cofactor. Mg(2+) serves as cofactor.

The catalysed reaction is (2R)-2,3-dihydroxy-3-methylbutanoate = 3-methyl-2-oxobutanoate + H2O. The enzyme catalyses (2R,3R)-2,3-dihydroxy-3-methylpentanoate = (S)-3-methyl-2-oxopentanoate + H2O. The protein operates within amino-acid biosynthesis; L-isoleucine biosynthesis; L-isoleucine from 2-oxobutanoate: step 3/4. It participates in amino-acid biosynthesis; L-valine biosynthesis; L-valine from pyruvate: step 3/4. In terms of biological role, functions in the biosynthesis of branched-chain amino acids. Catalyzes the dehydration of (2R,3R)-2,3-dihydroxy-3-methylpentanoate (2,3-dihydroxy-3-methylvalerate) into 2-oxo-3-methylpentanoate (2-oxo-3-methylvalerate) and of (2R)-2,3-dihydroxy-3-methylbutanoate (2,3-dihydroxyisovalerate) into 2-oxo-3-methylbutanoate (2-oxoisovalerate), the penultimate precursor to L-isoleucine and L-valine, respectively. This chain is Dihydroxy-acid dehydratase, found in Corynebacterium glutamicum (strain R).